A 250-amino-acid polypeptide reads, in one-letter code: UPF0259 membrane protein PC1_1998 (250 aa).

The next 6 membrane-spanning stretches (helical) occupy residues 20–40, 90–110, 132–152, 156–176, 192–212, and 222–242; these read FISI…LNHA, FAAL…IQLV, LLFL…LLVI, LLAI…SGIF, ATAP…LVVS, and LGVV…IYLF.

The protein belongs to the UPF0259 family.

Its subcellular location is the cell inner membrane. The polypeptide is UPF0259 membrane protein PC1_1998 (Pectobacterium carotovorum subsp. carotovorum (strain PC1)).